The primary structure comprises 308 residues: Cell division protein FtsQ (308 aa).

Residues 1 to 28 (MQSLSFPPNRRTPRLAPPRRETGRRDPA) form a disordered region. The Cytoplasmic portion of the chain corresponds to 1-46 (MQSLSFPPNRRTPRLAPPRRETGRRDPAPSRWAYRAQRLWLTPMFR). Basic and acidic residues predominate over residues 18-28 (PRRETGRRDPA). Residues 47 to 67 (TALRVGLPIVGVLLVVALIFA) form a helical membrane-spanning segment. Over 68–308 (SADRRAAMAG…RGIDTSGSDL (241 aa)) the chain is Periplasmic. The 69-residue stretch at 92–160 (FMVTLLSVDG…GLLEVRVTER (69 aa)) folds into the POTRA domain.

The protein belongs to the FtsQ/DivIB family. FtsQ subfamily.

It localises to the cell inner membrane. Functionally, essential cell division protein. The polypeptide is Cell division protein FtsQ (Cereibacter sphaeroides (strain ATCC 17023 / DSM 158 / JCM 6121 / CCUG 31486 / LMG 2827 / NBRC 12203 / NCIMB 8253 / ATH 2.4.1.) (Rhodobacter sphaeroides)).